We begin with the raw amino-acid sequence, 193 residues long: Holliday junction branch migration complex subunit RuvA (193 aa).

The interval 1–64 (MIGRIAGILL…EDAHLLYGFL (64 aa)) is domain I. Positions 65–139 (TQQERTTFRE…GKLGADLGAL (75 aa)) are domain II. The segment at 139-143 (LAGAA) is flexible linker. A domain III region spans residues 144–193 (SPSDHATDILNALLALGYSEKEGLAAIKNVPAGTGVSEGIKLALKALSKA).

This sequence belongs to the RuvA family. In terms of assembly, homotetramer. Forms an RuvA(8)-RuvB(12)-Holliday junction (HJ) complex. HJ DNA is sandwiched between 2 RuvA tetramers; dsDNA enters through RuvA and exits via RuvB. An RuvB hexamer assembles on each DNA strand where it exits the tetramer. Each RuvB hexamer is contacted by two RuvA subunits (via domain III) on 2 adjacent RuvB subunits; this complex drives branch migration. In the full resolvosome a probable DNA-RuvA(4)-RuvB(12)-RuvC(2) complex forms which resolves the HJ.

It localises to the cytoplasm. The RuvA-RuvB-RuvC complex processes Holliday junction (HJ) DNA during genetic recombination and DNA repair, while the RuvA-RuvB complex plays an important role in the rescue of blocked DNA replication forks via replication fork reversal (RFR). RuvA specifically binds to HJ cruciform DNA, conferring on it an open structure. The RuvB hexamer acts as an ATP-dependent pump, pulling dsDNA into and through the RuvAB complex. HJ branch migration allows RuvC to scan DNA until it finds its consensus sequence, where it cleaves and resolves the cruciform DNA. The chain is Holliday junction branch migration complex subunit RuvA from Burkholderia cenocepacia (strain ATCC BAA-245 / DSM 16553 / LMG 16656 / NCTC 13227 / J2315 / CF5610) (Burkholderia cepacia (strain J2315)).